A 435-amino-acid polypeptide reads, in one-letter code: Keratin, type I cytoskeletal 18 (435 aa).

Residues 1 to 28 (MSLRSSYSVRSSTSQVPVSQMSQMSQMS) show a composition bias toward low complexity. The interval 1–36 (MSLRSSYSVRSSTSQVPVSQMSQMSQMSIKRTTNVP) is disordered. The interval 2 to 88 (SLRSSYSVRS…TGATGDIMGN (87 aa)) is head. Residues 89–123 (EKMAMQNLNDRLASYLRSETLEQANSKLELKIREA) form a coil 1A region. The region spanning 89–399 (EKMAMQNLND…RLLDGGDFKL (311 aa)) is the IF rod domain. A linker 1 region spans residues 124-140 (LEKKGPEVCDYSRFQPI). The coil 1B stretch occupies residues 141–232 (IDDLRRKIFD…KNHDNEVMEL (92 aa)). The tract at residues 233-256 (RNQISHSGVQVDVDAPKGQDLAKI) is linker 12. Positions 257 to 394 (MEEIRSKYEK…IATYRRLLDG (138 aa)) are coil 2. A tail region spans residues 395-435 (GDFKLQDALEEQKRVKVMTVTQTLVDGKVVSSSTETKEKKF).

It belongs to the intermediate filament family. In terms of assembly, heterotetramer of two type I and two type II keratins. Keratin-18 associates with keratin-8. Phosphorylated. Post-translationally, proteolytically cleaved by caspases during epithelial cell apoptosis. Abundantly expressed in an even distribution throughout the optic nerve, localizing specifically to the astrocyte domains. Moderately expressed in spinal cord, brain, liver and oocytes.

When phosphorylated, plays a role in filament reorganization. This is Keratin, type I cytoskeletal 18 (krt18) from Carassius auratus (Goldfish).